The chain runs to 163 residues: MTHPLPHDSHTSGAPPLVNKSRDLANGPPFFSPLQSLWEEFLHLLFMGTLLFYRIATKALRGKATLLKSHSKQPAQPGWEPGIRAPSPVPASSLQDHSRLTSLSRTGKEQRRTLSLIRKTSGTPTESTVATAAASTTEVPSRLPWAARAGFKRTTGVCIALPT.

Over residues 1–10 the composition is skewed to basic and acidic residues; that stretch reads MTHPLPHDSH. Disordered stretches follow at residues 1 to 21 and 71 to 112; these read MTHP…VNKS and SKQP…EQRR. The segment covering 90-105 has biased composition (polar residues); that stretch reads PASSLQDHSRLTSLSR.

This is an uncharacterized protein from Homo sapiens (Human).